Consider the following 40-residue polypeptide: Dihydrolipoyl dehydrogenase (40 aa).

An FAD-binding site is contributed by 36-40 (EKRGT).

It belongs to the class-I pyridine nucleotide-disulfide oxidoreductase family. Homodimer. The cofactor is FAD.

It localises to the mitochondrion matrix. It catalyses the reaction N(6)-[(R)-dihydrolipoyl]-L-lysyl-[protein] + NAD(+) = N(6)-[(R)-lipoyl]-L-lysyl-[protein] + NADH + H(+). Lipoamide dehydrogenase is a component of the glycine cleavage system as well as of the alpha-ketoacid dehydrogenase complexes. The pyruvate dehydrogenase complex contains multiple copies of three enzymatic components: pyruvate dehydrogenase (E1), dihydrolipoamide acetyltransferase (E2) and lipoamide dehydrogenase (E3). The polypeptide is Dihydrolipoyl dehydrogenase (Solanum tuberosum (Potato)).